Here is a 91-residue protein sequence, read N- to C-terminus: Acylphosphatase (91 aa).

One can recognise an Acylphosphatase-like domain in the interval 6 to 91 (CMRCYISGRV…WEDYITFDVL (86 aa)). Residues R21 and N39 contribute to the active site.

It belongs to the acylphosphatase family.

The catalysed reaction is an acyl phosphate + H2O = a carboxylate + phosphate + H(+). The chain is Acylphosphatase (acyP) from Legionella pneumophila (strain Lens).